The chain runs to 545 residues: Ribulokinase (545 aa).

It belongs to the ribulokinase family.

It catalyses the reaction D-ribulose + ATP = D-ribulose 5-phosphate + ADP + H(+). It carries out the reaction L-ribulose + ATP = L-ribulose 5-phosphate + ADP + H(+). It participates in carbohydrate degradation; L-arabinose degradation via L-ribulose; D-xylulose 5-phosphate from L-arabinose (bacterial route): step 2/3. The chain is Ribulokinase from Staphylococcus aureus (strain bovine RF122 / ET3-1).